The chain runs to 278 residues: MALKTFNPITPSQRQLVIVDRSALYKGKPVKALTEGLTKSGGRNNLGRITARFIGGGHKRTYRLIDFKRRKFDVEGTVERIEYDPNRTAFIALVNYADGEKAYILAPQRLAAGDKVIASEKAVDVKPGNTMPLQFIPVGSIIHNVEMKPGKGGQIARSAGGYAQLVGRDQGMAILRLNSGEQRLVHGSCLASIGAVSNPDHANINDGKAGRTVWRGKRPHNRGVVMNPVDHPHGGGEGRTSGGRHPVTPWGKPTKGKRTRSNKSTDKMIMRSRHQRKK.

The disordered stretch occupies residues 202–278; sequence ANINDGKAGR…IMRSRHQRKK (77 aa).

Belongs to the universal ribosomal protein uL2 family. In terms of assembly, part of the 50S ribosomal subunit. Forms a bridge to the 30S subunit in the 70S ribosome.

Functionally, one of the primary rRNA binding proteins. Required for association of the 30S and 50S subunits to form the 70S ribosome, for tRNA binding and peptide bond formation. It has been suggested to have peptidyltransferase activity; this is somewhat controversial. Makes several contacts with the 16S rRNA in the 70S ribosome. This Rhizobium johnstonii (strain DSM 114642 / LMG 32736 / 3841) (Rhizobium leguminosarum bv. viciae) protein is Large ribosomal subunit protein uL2.